A 74-amino-acid polypeptide reads, in one-letter code: Defensin-like protein P322 (74 aa).

Positions 1 to 19 (MRFFATFFLLAMLVVATKM) are cleaved as a signal peptide. Cystine bridges form between C30/C74, C41/C61, C47/C68, and C51/C70.

Belongs to the DEFL family. Protease inhibitor I18 (RTI/MTI-2) subfamily. In terms of tissue distribution, tuber.

It is found in the secreted. The polypeptide is Defensin-like protein P322 (Solanum tuberosum (Potato)).